The primary structure comprises 701 residues: Lutropin-choriogonadotropic hormone receptor (701 aa).

Residues 1–26 form the signal peptide; sequence MGRPSLALRLLLALLLLPPPAPLLWA. Residues 27–365 lie on the Extracellular side of the membrane; it reads LRPAPCPEPC…EDIMGYNFLR (339 aa). N-linked (GlcNAc...) asparagine glycosylation occurs at asparagine 101. LRR repeat units follow at residues 124-149, 151-173, 174-198, 200-222, 223-246, and 250-271; these read LPRL…IFSS, FNFI…AFQG, MNNE…AFNG, TLIS…AFRG, ATGP…GLES, and LIAT…TNLL. Asparagine 176 and asparagine 197 each carry an N-linked (GlcNAc...) asparagine glycan. 3 N-linked (GlcNAc...) asparagine glycosylation sites follow: asparagine 293, asparagine 301, and asparagine 315. Sulfotyrosine is present on tyrosine 333. The helical transmembrane segment at 366 to 387 threads the bilayer; the sequence is VLIWLINILAITGNVTVLFVLL. Over 388–397 the chain is Cytoplasmic; sequence TSRYKLTVPR. A helical membrane pass occupies residues 398 to 418; sequence FLMCNLSFADFCMGLYLLLIA. At 419 to 441 the chain is on the extracellular side; that stretch reads SVDAQTKGQYYNHAIDWQTGSGC. The cysteines at positions 441 and 516 are disulfide-linked. Residues 442-464 traverse the membrane as a helical segment; the sequence is SAAGFFTVFASELSVYTLTVITL. The Cytoplasmic segment spans residues 465–484; sequence ERWHTITYAIQLDQKLRLKH. The chain crosses the membrane as a helical span at residues 485 to 507; the sequence is AIPVMLGGWLFSTLIAVLPLVGV. Over 508–527 the chain is Extracellular; sequence SNYMKVSICLPMDVESTLSQ. Residues 528 to 551 form a helical membrane-spanning segment; it reads VYILTILILNVMAFIIICACYIKI. The Cytoplasmic segment spans residues 552 to 572; the sequence is YFAVQNPELMATNKDTKIAKK. Residues 573–596 traverse the membrane as a helical segment; the sequence is MAVLIFTDFTCMAPISFFAISAAF. Residues 597–607 lie on the Extracellular side of the membrane; the sequence is KVPLITVTNSK. Residues 608 to 629 traverse the membrane as a helical segment; that stretch reads VLLVLFYPVNSCANPFLYAIFT. The Cytoplasmic portion of the chain corresponds to 630-701; it reads KAFQRDFFLL…VLDKTCYKEC (72 aa). 2 S-palmitoyl cysteine lipidation sites follow: cysteine 645 and cysteine 646.

The protein belongs to the G-protein coupled receptor 1 family. FSH/LSH/TSH subfamily. Sulfated.

The protein localises to the cell membrane. Its function is as follows. Receptor for lutropin-choriogonadotropic hormone. The activity of this receptor is mediated by G proteins which activate adenylate cyclase. This chain is Lutropin-choriogonadotropic hormone receptor (LHCGR), found in Bos taurus (Bovine).